Reading from the N-terminus, the 139-residue chain is Small ribosomal subunit protein uS12 (139 aa).

Positions 1-21 (MPTINQLVRKGRKAVQEKSTA) are disordered. Position 102 is a 3-methylthioaspartic acid (aspartate 102).

Belongs to the universal ribosomal protein uS12 family. In terms of assembly, part of the 30S ribosomal subunit. Contacts proteins S8 and S17. May interact with IF1 in the 30S initiation complex.

In terms of biological role, with S4 and S5 plays an important role in translational accuracy. Functionally, interacts with and stabilizes bases of the 16S rRNA that are involved in tRNA selection in the A site and with the mRNA backbone. Located at the interface of the 30S and 50S subunits, it traverses the body of the 30S subunit contacting proteins on the other side and probably holding the rRNA structure together. The combined cluster of proteins S8, S12 and S17 appears to hold together the shoulder and platform of the 30S subunit. The protein is Small ribosomal subunit protein uS12 of Alkaliphilus metalliredigens (strain QYMF).